A 358-amino-acid chain; its full sequence is Polyadenylate-binding protein-interacting protein 11 (358 aa).

Low complexity predominate over residues 1–19 (MAVVETGAAATAADAGGVV). Residues 1-45 (MAVVETGAAATAADAGGVVIQPPPSSPPSSMTSQDSGVSSDDQNH) are disordered. The segment covering 31–41 (MTSQDSGVSSD) has biased composition (polar residues). The PAM2-like signature appears at 92–102 (KLNPMAEEFVP). The segment at 136-164 (GGYGNENGGFRRKKSFGQGKRRMNARTSM) is disordered. A compositionally biased stretch (basic residues) spans 145–159 (FRRKKSFGQGKRRMN). The short motif at 146 to 157 (RRKKSFGQGKRR) is the Bipartite nuclear localization signal element. 2 consecutive RRM domains span residues 173–248 (RTVY…PSKT) and 270–346 (RTIY…PSKT).

As to expression, expressed in cauline leaves, stems, immature siliques and primary inflorescences.

The protein localises to the nucleus. This Arabidopsis thaliana (Mouse-ear cress) protein is Polyadenylate-binding protein-interacting protein 11 (CID11).